The chain runs to 182 residues: Ribosome-recycling factor (182 aa).

Residues 136-158 (IKKQEKEGDLSEDQSRDEQDQVQ) are disordered.

This sequence belongs to the RRF family.

Its subcellular location is the cytoplasm. Responsible for the release of ribosomes from messenger RNA at the termination of protein biosynthesis. May increase the efficiency of translation by recycling ribosomes from one round of translation to another. The sequence is that of Ribosome-recycling factor from Synechococcus sp. (strain CC9311).